Here is a 571-residue protein sequence, read N- to C-terminus: Arginine--tRNA ligase (571 aa).

Positions 122–132 (PNIAKEMHVGH) match the 'HIGH' region motif.

The protein belongs to the class-I aminoacyl-tRNA synthetase family. Monomer.

It is found in the cytoplasm. The enzyme catalyses tRNA(Arg) + L-arginine + ATP = L-arginyl-tRNA(Arg) + AMP + diphosphate. The chain is Arginine--tRNA ligase from Buchnera aphidicola subsp. Cinara cedri (strain Cc).